We begin with the raw amino-acid sequence, 196 residues long: MSRYRGPRLKKIRRLGALPGLTRKTPKSGSNLKKKFNSGKKEQYRIRLQEKQKLRFHYGLTERQLLRYVHIAGKAKRSTGQVLLQLLEMRLDNIIFRLGMASTIPGARQLVNHRHILVNGRIVNIPSFRCKPRDIITTKDNQRSKGLVQNSIASSDPGKLPKHLTIDTVEYKGLVNKILDRKWVGLKINELLVVEY.

An S4 RNA-binding domain is found at 89 to 169 (MRLDNIIFRL…LPKHLTIDTV (81 aa)).

It belongs to the universal ribosomal protein uS4 family. As to quaternary structure, part of the 30S ribosomal subunit. Contacts protein S5. The interaction surface between S4 and S5 is involved in control of translational fidelity.

It localises to the plastid. Its subcellular location is the chloroplast. Functionally, one of the primary rRNA binding proteins, it binds directly to 16S rRNA where it nucleates assembly of the body of the 30S subunit. Its function is as follows. With S5 and S12 plays an important role in translational accuracy. This is Small ribosomal subunit protein uS4c (rps4) from Stipellula capensis (Cape rice grass).